The sequence spans 509 residues: Cytochrome P450 monooxygenase traB (509 aa).

The helical transmembrane segment at 8–28 (LVELVSITGGLIVLFIAYTGF) threads the bilayer. Residue cysteine 453 participates in heme binding.

Belongs to the cytochrome P450 family. Heme serves as cofactor.

The protein resides in the membrane. Its pathway is secondary metabolite biosynthesis. In terms of biological role, cytochrome P450 monooxygenase; part of the tra gene cluster that produces terrestric acid. The clavatol biosynthesis cluster cla and the terrestric acid cluster tra are both involved in the production of peniphenones and penilactones. The non-reducing PKS claF is responsible for the formation of clavatol from successive condensations of 3 malonyl-CoA units, presumably with a simple acetyl-CoA starter unit, and 2 methylation steps. The esterase claE probably collaborates with claF by catalyzing the hydrolysis of ACP-bound acyl intermediates to free the ACP from stalled intermediates. The clavatol oxidase claD then converts clavatol to hydroxyclavatol. Spontaneous dehydration of hydroxyclavatol leads to the accumulation of the highly active ortho-quinone methide. On the other hand, the PKS-NRPS hybrid traA is involved in the formation of crustosic acid, with the help of traB and traD. The polyketide synthase module (PKS) of traA is responsible for the synthesis of the polyketide backbone via the condensation of an acetyl-CoA starter unit with 3 malonyl-CoA units. The downstream nonribosomal peptide synthetase (NRPS) module then amidates the carboxyl end of the polyketide with L-malic acid. Because traA lacks a designated enoylreductase (ER) domain, the required activity is provided the enoyl reductase traG. Crustosic acid undergoes decarboxylation and isomerization to the terrestric acid, catalyzed by the 2-oxoglutarate-dependent dioxygenase traH. Both acids are further converted to the 2 gamma-butyrolactones (R)-5-methyltetronic acid and (S)-5-carboxylmethyltetronic acid, with involvement of the cytochrome P450 monooxygenase claJ. Spontaneous addition of the methide to these gamma-butyrolactones leads to peniphenone D and penilactone D, which undergo again stereospecific attacking by methide to give penilactones A and B. The sequence is that of Cytochrome P450 monooxygenase traB from Penicillium crustosum (Blue mold fungus).